Reading from the N-terminus, the 413-residue chain is Serine hydroxymethyltransferase (413 aa).

Residues L117 and 121-123 (GHL) contribute to the (6S)-5,6,7,8-tetrahydrofolate site. K226 carries the post-translational modification N6-(pyridoxal phosphate)lysine. 349-351 (SPF) is a (6S)-5,6,7,8-tetrahydrofolate binding site.

The protein belongs to the SHMT family. Homodimer. Requires pyridoxal 5'-phosphate as cofactor.

Its subcellular location is the cytoplasm. It carries out the reaction (6R)-5,10-methylene-5,6,7,8-tetrahydrofolate + glycine + H2O = (6S)-5,6,7,8-tetrahydrofolate + L-serine. It functions in the pathway one-carbon metabolism; tetrahydrofolate interconversion. The protein operates within amino-acid biosynthesis; glycine biosynthesis; glycine from L-serine: step 1/1. In terms of biological role, catalyzes the reversible interconversion of serine and glycine with tetrahydrofolate (THF) serving as the one-carbon carrier. This reaction serves as the major source of one-carbon groups required for the biosynthesis of purines, thymidylate, methionine, and other important biomolecules. Also exhibits THF-independent aldolase activity toward beta-hydroxyamino acids, producing glycine and aldehydes, via a retro-aldol mechanism. In Listeria innocua serovar 6a (strain ATCC BAA-680 / CLIP 11262), this protein is Serine hydroxymethyltransferase.